We begin with the raw amino-acid sequence, 107 residues long: U1-lycotoxin-Ls1f (107 aa).

A signal peptide spans 1–20 (MMKVLVVVALLVTLISYSSS). Residues 21–41 (EGIDDLEADELLSLMANEQTR) constitute a propeptide that is removed on maturation. Cystine bridges form between C44–C59, C51–C68, C58–C86, and C70–C84.

It belongs to the neurotoxin 19 (CSTX) family. 04 (U1-Lctx) subfamily. In terms of tissue distribution, expressed by the venom gland.

The protein resides in the secreted. This Lycosa singoriensis (Wolf spider) protein is U1-lycotoxin-Ls1f.